The following is a 459-amino-acid chain: Ribulose bisphosphate carboxylase large chain (459 aa).

K4 is subject to N6,N6,N6-trimethyllysine. Residues N113 and T163 each contribute to the substrate site. K165 (proton acceptor) is an active-site residue. K167 is a binding site for substrate. Mg(2+) contacts are provided by K191, D193, and E194. K191 carries the post-translational modification N6-carboxylysine. Catalysis depends on H284, which acts as the Proton acceptor. 3 residues coordinate substrate: R285, H317, and S369.

The protein belongs to the RuBisCO large chain family. Type I subfamily. As to quaternary structure, heterohexadecamer of 8 large chains and 8 small chains; disulfide-linked. The disulfide link is formed within the large subunit homodimers. The cofactor is Mg(2+). In terms of processing, the disulfide bond which can form in the large chain dimeric partners within the hexadecamer appears to be associated with oxidative stress and protein turnover.

Its subcellular location is the plastid. The protein resides in the chloroplast. The enzyme catalyses 2 (2R)-3-phosphoglycerate + 2 H(+) = D-ribulose 1,5-bisphosphate + CO2 + H2O. The catalysed reaction is D-ribulose 1,5-bisphosphate + O2 = 2-phosphoglycolate + (2R)-3-phosphoglycerate + 2 H(+). Functionally, ruBisCO catalyzes two reactions: the carboxylation of D-ribulose 1,5-bisphosphate, the primary event in carbon dioxide fixation, as well as the oxidative fragmentation of the pentose substrate in the photorespiration process. Both reactions occur simultaneously and in competition at the same active site. This is Ribulose bisphosphate carboxylase large chain from Apium graveolens (Celery).